The following is a 143-amino-acid chain: Holo-[acyl-carrier-protein] synthase (143 aa).

Residues Asp9 and Glu63 each contribute to the Mg(2+) site.

The protein belongs to the P-Pant transferase superfamily. AcpS family. The cofactor is Mg(2+).

It localises to the cytoplasm. It catalyses the reaction apo-[ACP] + CoA = holo-[ACP] + adenosine 3',5'-bisphosphate + H(+). Its function is as follows. Transfers the 4'-phosphopantetheine moiety from coenzyme A to a Ser of acyl-carrier-protein. This is Holo-[acyl-carrier-protein] synthase from Burkholderia mallei (strain NCTC 10247).